A 442-amino-acid chain; its full sequence is tRNA-2-methylthio-N(6)-dimethylallyladenosine synthase (442 aa).

Residues 6–122 enclose the MTTase N-terminal domain; the sequence is RKFYIHTFGC…LPVLIAEAGK (117 aa). 6 residues coordinate [4Fe-4S] cluster: cysteine 15, cysteine 51, cysteine 85, cysteine 157, cysteine 161, and cysteine 164. Positions 143–373 constitute a Radical SAM core domain; sequence RTQSLTAFVP…IDLQNGISAE (231 aa). Residues 376–439 form the TRAM domain; the sequence is RLAIGSVVEV…SATLIGRAAE (64 aa).

This sequence belongs to the methylthiotransferase family. MiaB subfamily. Monomer. The cofactor is [4Fe-4S] cluster.

Its subcellular location is the cytoplasm. The catalysed reaction is N(6)-dimethylallyladenosine(37) in tRNA + (sulfur carrier)-SH + AH2 + 2 S-adenosyl-L-methionine = 2-methylsulfanyl-N(6)-dimethylallyladenosine(37) in tRNA + (sulfur carrier)-H + 5'-deoxyadenosine + L-methionine + A + S-adenosyl-L-homocysteine + 2 H(+). Its function is as follows. Catalyzes the methylthiolation of N6-(dimethylallyl)adenosine (i(6)A), leading to the formation of 2-methylthio-N6-(dimethylallyl)adenosine (ms(2)i(6)A) at position 37 in tRNAs that read codons beginning with uridine. This is tRNA-2-methylthio-N(6)-dimethylallyladenosine synthase from Chlorobium limicola (strain DSM 245 / NBRC 103803 / 6330).